Reading from the N-terminus, the 228-residue chain is Phosphoribosylformylglycinamidine synthase subunit PurQ (228 aa).

The region spanning 3 to 226 (FAVIVFPGSN…VKYWRETHVV (224 aa)) is the Glutamine amidotransferase type-1 domain. The active-site Nucleophile is C86. Residues H195 and E197 contribute to the active site.

As to quaternary structure, part of the FGAM synthase complex composed of 1 PurL, 1 PurQ and 2 PurS subunits.

The protein localises to the cytoplasm. It carries out the reaction N(2)-formyl-N(1)-(5-phospho-beta-D-ribosyl)glycinamide + L-glutamine + ATP + H2O = 2-formamido-N(1)-(5-O-phospho-beta-D-ribosyl)acetamidine + L-glutamate + ADP + phosphate + H(+). It catalyses the reaction L-glutamine + H2O = L-glutamate + NH4(+). The protein operates within purine metabolism; IMP biosynthesis via de novo pathway; 5-amino-1-(5-phospho-D-ribosyl)imidazole from N(2)-formyl-N(1)-(5-phospho-D-ribosyl)glycinamide: step 1/2. Its function is as follows. Part of the phosphoribosylformylglycinamidine synthase complex involved in the purines biosynthetic pathway. Catalyzes the ATP-dependent conversion of formylglycinamide ribonucleotide (FGAR) and glutamine to yield formylglycinamidine ribonucleotide (FGAM) and glutamate. The FGAM synthase complex is composed of three subunits. PurQ produces an ammonia molecule by converting glutamine to glutamate. PurL transfers the ammonia molecule to FGAR to form FGAM in an ATP-dependent manner. PurS interacts with PurQ and PurL and is thought to assist in the transfer of the ammonia molecule from PurQ to PurL. The chain is Phosphoribosylformylglycinamidine synthase subunit PurQ from Geobacillus sp. (strain WCH70).